Consider the following 304-residue polypeptide: Urease accessory protein UreD (304 aa).

This sequence belongs to the UreD family. UreD, UreF and UreG form a complex that acts as a GTP-hydrolysis-dependent molecular chaperone, activating the urease apoprotein by helping to assemble the nickel containing metallocenter of UreC. The UreE protein probably delivers the nickel.

It localises to the cytoplasm. Required for maturation of urease via the functional incorporation of the urease nickel metallocenter. In Haloquadratum walsbyi (strain DSM 16790 / HBSQ001), this protein is Urease accessory protein UreD.